The following is a 126-amino-acid chain: Large ribosomal subunit protein bL17 (126 aa).

Belongs to the bacterial ribosomal protein bL17 family. As to quaternary structure, part of the 50S ribosomal subunit. Contacts protein L32.

This chain is Large ribosomal subunit protein bL17, found in Lysinibacillus sphaericus (strain C3-41).